The primary structure comprises 461 residues: MMQNLPFEPEFEQAYKELASTLENSTLFQKKPEYRKALQVVSVPERVIQFRVVWEDDKGQVQINRGYRVQFNSALGPYKGGLRFHPTVNLSILKFLGFEQIFKNALTGLNMGGGKGGSDFDPKGKTDNEIRRFCVSFMTELCKHIGADTDVPAGDIGVTGREVGFMFGQYKKIRNQWEGVLTGKGGSWGGSLIRPEATGYGVVYYVEHMIQHASGGKESFAGKRVAISGSGNVAQYAALKVIELGGSVISLSDSQGALVLNGEEGSFTAEEINTIAEIKVQRKQIAELATQDAFSSKFKYIPGARPWTNIAGRIDVALPSATQNEVSGDEAKALIAAGCKFIAEGSNMGSTQEAIDVFEAHRDANPGAAAIWYAPGKAANAGGVAVSGLEMAQNSARVNWSREEVDSRLKKIMEDCFNNGLSTAKEYVTPAEGVLPSLVAGSNIAGFTKVAEAMKEHGDWW.

Lysine 115 is an active-site residue.

Belongs to the Glu/Leu/Phe/Val dehydrogenases family. As to quaternary structure, homohexamer.

It carries out the reaction L-glutamate + NADP(+) + H2O = 2-oxoglutarate + NH4(+) + NADPH + H(+). In Penicillium chrysogenum (Penicillium notatum), this protein is NADP-specific glutamate dehydrogenase (GDH).